A 390-amino-acid chain; its full sequence is Protein YghO (390 aa).

This chain is Protein YghO (yghO), found in Escherichia coli (strain K12).